A 423-amino-acid chain; its full sequence is tRNA(Met) cytidine acetate ligase (423 aa).

Residues 7-20 (VVEY…HLYH), G102, N165, and R190 contribute to the ATP site.

The protein belongs to the TmcAL family.

Its subcellular location is the cytoplasm. It carries out the reaction cytidine(34) in elongator tRNA(Met) + acetate + ATP = N(4)-acetylcytidine(34) in elongator tRNA(Met) + AMP + diphosphate. In terms of biological role, catalyzes the formation of N(4)-acetylcytidine (ac(4)C) at the wobble position of elongator tRNA(Met), using acetate and ATP as substrates. First activates an acetate ion to form acetyladenylate (Ac-AMP) and then transfers the acetyl group to tRNA to form ac(4)C34. In Thermosipho africanus (strain TCF52B), this protein is tRNA(Met) cytidine acetate ligase.